The sequence spans 486 residues: Citrate synthase 3, mitochondrial (486 aa).

The N-terminal 23 residues, 1-23 (MVQRLLPGAHICRRSFNSSAIIK), are a transit peptide targeting the mitochondrion. Active-site residues include histidine 315, histidine 361, and aspartate 419. Positions 484–486 (NKL) match the Microbody targeting signal motif.

It belongs to the citrate synthase family.

The protein resides in the mitochondrion. The enzyme catalyses oxaloacetate + acetyl-CoA + H2O = citrate + CoA + H(+). The protein operates within carbohydrate metabolism; tricarboxylic acid cycle; isocitrate from oxaloacetate: step 1/2. Its function is as follows. Dual specificity mitochondrial citrate and methylcitrate synthase with similar catalytic efficiency with both acetyl-CoA and propionyl-CoA. The sequence is that of Citrate synthase 3, mitochondrial from Saccharomyces cerevisiae (strain ATCC 204508 / S288c) (Baker's yeast).